A 426-amino-acid chain; its full sequence is Enolase (426 aa).

(2R)-2-phosphoglycerate is bound at residue Gln-165. Catalysis depends on Glu-209, which acts as the Proton donor. Residues Asp-244, Glu-287, and Asp-313 each coordinate Mg(2+). (2R)-2-phosphoglycerate is bound by residues Lys-338, Arg-367, Ser-368, and Lys-389. Lys-338 (proton acceptor) is an active-site residue.

The protein belongs to the enolase family. Requires Mg(2+) as cofactor.

The protein localises to the cytoplasm. It is found in the secreted. It localises to the cell surface. It catalyses the reaction (2R)-2-phosphoglycerate = phosphoenolpyruvate + H2O. It functions in the pathway carbohydrate degradation; glycolysis; pyruvate from D-glyceraldehyde 3-phosphate: step 4/5. Its function is as follows. Catalyzes the reversible conversion of 2-phosphoglycerate (2-PG) into phosphoenolpyruvate (PEP). It is essential for the degradation of carbohydrates via glycolysis. This Methanococcus maripaludis (strain C7 / ATCC BAA-1331) protein is Enolase.